The sequence spans 390 residues: Digeranylgeranylglycerophospholipid reductase (390 aa).

10 residues coordinate FAD: A18, E37, C48, A49, A51, R98, V122, D278, G290, and I291. An a 2,3-bis-O-(geranylgeranyl)-sn-glycerol 1-phospholipid-binding site is contributed by V368.

The protein belongs to the geranylgeranyl reductase family. DGGGPL reductase subfamily. The cofactor is FAD.

It catalyses the reaction a 2,3-bis-O-phytanyl-sn-glycerol 1-phospholipid + 8 A = a 2,3-bis-O-(geranylgeranyl)-sn-glycerol 1-phospholipid + 8 AH2. The enzyme catalyses 2,3-bis-O-(phytanyl)-sn-glycerol 1-phosphate + 8 A = 2,3-bis-O-(geranylgeranyl)-sn-glycerol 1-phosphate + 8 AH2. The catalysed reaction is CDP-2,3-bis-O-(geranylgeranyl)-sn-glycerol + 8 AH2 = CDP-2,3-bis-O-(phytanyl)-sn-glycerol + 8 A. It carries out the reaction archaetidylserine + 8 AH2 = 2,3-bis-O-phytanyl-sn-glycero-3-phospho-L-serine + 8 A. The protein operates within membrane lipid metabolism; glycerophospholipid metabolism. In terms of biological role, is involved in the reduction of 2,3-digeranylgeranylglycerophospholipids (unsaturated archaeols) into 2,3-diphytanylglycerophospholipids (saturated archaeols) in the biosynthesis of archaeal membrane lipids. Catalyzes the formation of archaetidic acid (2,3-di-O-phytanyl-sn-glyceryl phosphate) from 2,3-di-O-geranylgeranylglyceryl phosphate (DGGGP) via the hydrogenation of each double bond of the isoprenoid chains. Is also probably able to reduce double bonds of geranyl groups in CDP-2,3-bis-O-(geranylgeranyl)-sn-glycerol and archaetidylserine, thus acting at various stages in the biosynthesis of archaeal membrane lipids. In Methanococcus maripaludis (strain C5 / ATCC BAA-1333), this protein is Digeranylgeranylglycerophospholipid reductase.